The following is a 417-amino-acid chain: Gamma-glutamyl phosphate reductase (417 aa).

It belongs to the gamma-glutamyl phosphate reductase family.

Its subcellular location is the cytoplasm. The enzyme catalyses L-glutamate 5-semialdehyde + phosphate + NADP(+) = L-glutamyl 5-phosphate + NADPH + H(+). It participates in amino-acid biosynthesis; L-proline biosynthesis; L-glutamate 5-semialdehyde from L-glutamate: step 2/2. Catalyzes the NADPH-dependent reduction of L-glutamate 5-phosphate into L-glutamate 5-semialdehyde and phosphate. The product spontaneously undergoes cyclization to form 1-pyrroline-5-carboxylate. This chain is Gamma-glutamyl phosphate reductase, found in Polynucleobacter asymbioticus (strain DSM 18221 / CIP 109841 / QLW-P1DMWA-1) (Polynucleobacter necessarius subsp. asymbioticus).